The chain runs to 420 residues: Glutamate dehydrogenase (420 aa).

Lys105 is an active-site residue. 220 to 226 (GYGNAGY) is a binding site for NAD(+).

It belongs to the Glu/Leu/Phe/Val dehydrogenases family. Homohexamer.

It localises to the cytoplasm. The catalysed reaction is L-glutamate + NAD(+) + H2O = 2-oxoglutarate + NH4(+) + NADH + H(+). It catalyses the reaction L-glutamate + NADP(+) + H2O = 2-oxoglutarate + NH4(+) + NADPH + H(+). In Pyrococcus horikoshii (strain ATCC 700860 / DSM 12428 / JCM 9974 / NBRC 100139 / OT-3), this protein is Glutamate dehydrogenase (gdhA).